The following is a 460-amino-acid chain: Argininosuccinate lyase (460 aa).

This sequence belongs to the lyase 1 family. Argininosuccinate lyase subfamily.

The protein localises to the cytoplasm. The enzyme catalyses 2-(N(omega)-L-arginino)succinate = fumarate + L-arginine. It functions in the pathway amino-acid biosynthesis; L-arginine biosynthesis; L-arginine from L-ornithine and carbamoyl phosphate: step 3/3. The polypeptide is Argininosuccinate lyase (Leuconostoc mesenteroides subsp. mesenteroides (strain ATCC 8293 / DSM 20343 / BCRC 11652 / CCM 1803 / JCM 6124 / NCDO 523 / NBRC 100496 / NCIMB 8023 / NCTC 12954 / NRRL B-1118 / 37Y)).